A 404-amino-acid polypeptide reads, in one-letter code: G1/S-specific cyclin-E2 (404 aa).

The disordered stretch occupies residues 1–41; it reads MSRRSSRLQAKQHAQPNQPDSPQETQIIQAKKRKTAQDVKK. A compositionally biased stretch (polar residues) spans 7-28; sequence RLQAKQHAQPNQPDSPQETQII. Serine 21 carries the post-translational modification Phosphoserine. Residue lysine 348 is modified to N6-lactoyllysine. Phosphoserine is present on serine 383. The residue at position 392 (threonine 392) is a Phosphothreonine.

It belongs to the cyclin family. Cyclin E subfamily. Interacts with the CDK2 (in vivo) and CDK3 (in vitro) protein kinases to form a serine/threonine kinase holoenzyme complex. The cyclin subunit imparts substrate specificity to the complex. Phosphorylation by CDK2 triggers its release from CDK2 and degradation via the ubiquitin proteasome pathway. In terms of processing, lactylated at Lys-348. Delactylated by SIRT3. Highest levels in adult testis, thymus and brain. Lower levels in placenta, spleen and colon.

It is found in the nucleus. Essential for the control of the cell cycle at the late G1 and early S phase. This is G1/S-specific cyclin-E2 (Ccne2) from Mus musculus (Mouse).